The chain runs to 187 residues: UPF0301 protein Cpar_0662 (187 aa).

Belongs to the UPF0301 (AlgH) family.

The chain is UPF0301 protein Cpar_0662 from Chlorobaculum parvum (strain DSM 263 / NCIMB 8327) (Chlorobium vibrioforme subsp. thiosulfatophilum).